The primary structure comprises 554 residues: Dihydroxy-acid dehydratase (554 aa).

Asp-78 provides a ligand contact to Mg(2+). Cys-119 contributes to the [2Fe-2S] cluster binding site. Mg(2+) contacts are provided by Asp-120 and Lys-121. Lys-121 carries the post-translational modification N6-carboxylysine. Cys-191 is a binding site for [2Fe-2S] cluster. Glu-442 is a binding site for Mg(2+). The active-site Proton acceptor is the Ser-468.

This sequence belongs to the IlvD/Edd family. In terms of assembly, homodimer. The cofactor is [2Fe-2S] cluster. Mg(2+) is required as a cofactor.

It carries out the reaction (2R)-2,3-dihydroxy-3-methylbutanoate = 3-methyl-2-oxobutanoate + H2O. The catalysed reaction is (2R,3R)-2,3-dihydroxy-3-methylpentanoate = (S)-3-methyl-2-oxopentanoate + H2O. Its pathway is amino-acid biosynthesis; L-isoleucine biosynthesis; L-isoleucine from 2-oxobutanoate: step 3/4. The protein operates within amino-acid biosynthesis; L-valine biosynthesis; L-valine from pyruvate: step 3/4. Its function is as follows. Functions in the biosynthesis of branched-chain amino acids. Catalyzes the dehydration of (2R,3R)-2,3-dihydroxy-3-methylpentanoate (2,3-dihydroxy-3-methylvalerate) into 2-oxo-3-methylpentanoate (2-oxo-3-methylvalerate) and of (2R)-2,3-dihydroxy-3-methylbutanoate (2,3-dihydroxyisovalerate) into 2-oxo-3-methylbutanoate (2-oxoisovalerate), the penultimate precursor to L-isoleucine and L-valine, respectively. This Thermotoga sp. (strain RQ2) protein is Dihydroxy-acid dehydratase.